Consider the following 738-residue polypeptide: Polyphosphate kinase (738 aa).

Residues 1–48 (MIGNDRWVTEIETGPVTEARPDTNAREPGDRTPAAPPAATPAATTDQL) are disordered. The span at 19–30 (ARPDTNAREPGD) shows a compositional bias: basic and acidic residues. Position 91 (asparagine 91) interacts with ATP. 2 residues coordinate Mg(2+): arginine 427 and arginine 457. The Phosphohistidine intermediate role is filled by histidine 487. Tyrosine 520, arginine 620, and histidine 648 together coordinate ATP.

The protein belongs to the polyphosphate kinase 1 (PPK1) family. Mg(2+) serves as cofactor. Post-translationally, an intermediate of this reaction is the autophosphorylated ppk in which a phosphate is covalently linked to a histidine residue through a N-P bond.

The catalysed reaction is [phosphate](n) + ATP = [phosphate](n+1) + ADP. In terms of biological role, catalyzes the reversible transfer of the terminal phosphate of ATP to form a long-chain polyphosphate (polyP). The sequence is that of Polyphosphate kinase from Mycobacterium ulcerans (strain Agy99).